We begin with the raw amino-acid sequence, 660 residues long: Polycomb protein SCMH1 (660 aa).

MBT repeat units follow at residues 28–126 and 134–235; these read FTWD…LQPP and SSWP…LQPP. A disordered region spans residues 233–345; that stretch reads QPPGTKVVIP…EPDTSTVPQD (113 aa). 2 stretches are compositionally biased toward basic residues: residues 273 to 284 and 305 to 320; these read RGRKPGKKRGRT and FPKK…RKPR. Positions 330-343 are enriched in low complexity; it reads PTTSTPEPDTSTVP. The 66-residue stretch at 593–658 folds into the SAM domain; sequence WTVEDVMQFV…SYHIDRLKQG (66 aa).

The protein belongs to the SCM family. As to quaternary structure, interacts with the SAM domain of PHC1 via its SAM domain in vitro. Associates with a PRC1-like complex. Strongly expressed in heart, muscle and pancreas. Weakly expressed in brain, placenta, lung, liver and kidney.

Its subcellular location is the nucleus. Functionally, associates with Polycomb group (PcG) multiprotein complexes; the complex class is required to maintain the transcriptionally repressive state of some genes. The sequence is that of Polycomb protein SCMH1 from Homo sapiens (Human).